The chain runs to 183 residues: MLLEETLKSCPTVKRGDYEYFIHPISDGVPIVNPKLLREVATRIIKEVDFENIDKIVTAEAMGIPLVTTLSLYTDVPYVIMRKREYKLKGEIPVHQETGYSKGQLYLNGIEKGDRVLIVDDVISTGGTMIAIINALKKAGAEIKDIVCVIERGEGKKIVEEKTGYKIKTLVKLDVKDGKVVIL.

Belongs to the purine/pyrimidine phosphoribosyltransferase family. Archaeal HPRT subfamily. Homodimer.

Its subcellular location is the cytoplasm. It carries out the reaction IMP + diphosphate = hypoxanthine + 5-phospho-alpha-D-ribose 1-diphosphate. The enzyme catalyses GMP + diphosphate = guanine + 5-phospho-alpha-D-ribose 1-diphosphate. Its pathway is purine metabolism; IMP biosynthesis via salvage pathway; IMP from hypoxanthine: step 1/1. Functionally, catalyzes a salvage reaction resulting in the formation of IMP that is energically less costly than de novo synthesis. The chain is Hypoxanthine/guanine phosphoribosyltransferase from Methanotorris igneus (strain DSM 5666 / JCM 11834 / Kol 5).